Reading from the N-terminus, the 78-residue chain is MKFIVEREHLLKPLQQVSSPLGGRPTLPILGNLLLQVTEGSLLLTGTDLEMEMVARVALSQPHEPGATTVPARKFFDI.

The protein belongs to the beta sliding clamp family. In terms of assembly, forms a ring-shaped head-to-tail homodimer around DNA which binds and tethers DNA polymerases and other proteins to the DNA. The DNA replisome complex has a single clamp-loading complex (3 tau and 1 each of delta, delta', psi and chi subunits) which binds 3 Pol III cores (1 core on the leading strand and 2 on the lagging strand) each with a beta sliding clamp dimer. Additional proteins in the replisome are other copies of gamma, psi and chi, Ssb, DNA helicase and RNA primase.

The protein localises to the cytoplasm. Its function is as follows. Confers DNA tethering and processivity to DNA polymerases and other proteins. Acts as a clamp, forming a ring around DNA (a reaction catalyzed by the clamp-loading complex) which diffuses in an ATP-independent manner freely and bidirectionally along dsDNA. Initially characterized for its ability to contact the catalytic subunit of DNA polymerase III (Pol III), a complex, multichain enzyme responsible for most of the replicative synthesis in bacteria; Pol III exhibits 3'-5' exonuclease proofreading activity. The beta chain is required for initiation of replication as well as for processivity of DNA replication. The protein is Beta sliding clamp (dnaN) of Serratia marcescens.